Here is a 327-residue protein sequence, read N- to C-terminus: Tryptophan--tRNA ligase (327 aa).

ATP is bound by residues 9–11 (RPT) and 17–18 (GN). The 'HIGH' region motif lies at 10 to 18 (PTGNLHLGN). D133 lines the L-tryptophan pocket. Residues 145 to 147 (GKD), V186, and 194 to 198 (KMGKS) contribute to the ATP site. The short motif at 194 to 198 (KMGKS) is the 'KMSKS' region element.

Belongs to the class-I aminoacyl-tRNA synthetase family. Homodimer.

The protein resides in the cytoplasm. It catalyses the reaction tRNA(Trp) + L-tryptophan + ATP = L-tryptophyl-tRNA(Trp) + AMP + diphosphate + H(+). Its function is as follows. Catalyzes the attachment of tryptophan to tRNA(Trp). In Porphyromonas gingivalis (strain ATCC BAA-308 / W83), this protein is Tryptophan--tRNA ligase.